The primary structure comprises 557 residues: Probable WRKY transcription factor 20 (557 aa).

The segment covering 1 to 12 (MNPQANDRKEFQ) has biased composition (basic and acidic residues). 2 disordered regions span residues 1–36 (MNPQ…GGGA) and 76–215 (KPEP…DGYN). The segment covering 95-114 (SASSSSYTGRGFHQNTFTEQ) has biased composition (polar residues). Over residues 151-169 (SSHSPSSISDAAGSSSELS) the composition is skewed to low complexity. Over residues 193–207 (SIQTSQNDSRGSTPS) the composition is skewed to polar residues. A DNA-binding region (WRKY 1) is located at residues 205–269 (TPSILADDGY…YKGTHDHPKP (65 aa)). Residues Cys-236, Cys-241, His-264, and His-266 each coordinate Zn(2+). The segment at 257–348 (DIIYKGTHDH…PDDDDPFSKR (92 aa)) is disordered. A compositionally biased stretch (basic and acidic residues) spans 282–299 (QEERLDKYPSSTGRDEKG). Over residues 303-314 (YNLSNPNEQTGN) the composition is skewed to polar residues. Positions 321–332 (SASDDGGEAAAS) are enriched in low complexity. A DNA-binding region (WRKY 2) is located at residues 375–440 (SEVDILDDGY…YEGKHDHDVP (66 aa)). Residues Cys-406, Cys-411, His-435, and His-437 each coordinate Zn(2+). Disordered regions lie at residues 433 to 486 (GKHD…QHQN) and 520 to 557 (NQYG…QSGP). The span at 520–536 (NQYGQRETKNETQNGDI) shows a compositional bias: polar residues.

Belongs to the WRKY group I family.

It is found in the nucleus. Its function is as follows. Transcription factor. Interacts specifically with the W box (5'-(T)TGAC[CT]-3'), a frequently occurring elicitor-responsive cis-acting element. In Arabidopsis thaliana (Mouse-ear cress), this protein is Probable WRKY transcription factor 20 (WRKY20).